Reading from the N-terminus, the 291-residue chain is Bis(5'-nucleosyl)-tetraphosphatase, symmetrical (291 aa).

The protein belongs to the Ap4A hydrolase family.

The enzyme catalyses P(1),P(4)-bis(5'-adenosyl) tetraphosphate + H2O = 2 ADP + 2 H(+). Its function is as follows. Hydrolyzes diadenosine 5',5'''-P1,P4-tetraphosphate to yield ADP. The protein is Bis(5'-nucleosyl)-tetraphosphatase, symmetrical of Coxiella burnetii (strain RSA 331 / Henzerling II).